We begin with the raw amino-acid sequence, 333 residues long: HTH-type transcriptional regulator Cphy_2742 (333 aa).

Positions 1–55 (MNIYDVSQKAGVSIATVSRVINGNPNVSEKTKQKVLDVMKEIGYTPNVFARGLGL) constitute an HTH lacI-type domain. A DNA-binding region (H-T-H motif) is located at residues 3 to 22 (IYDVSQKAGVSIATVSRVIN).

The protein resides in the cytoplasm. Its function is as follows. Involved in control of pectin and galacturonic acid metabolism. Probably represses a comprehensive set of pectin fermentation genes by binding a conserved palindrome at or downstream of their transcription start site to block transcription. In the presence of galacturonic acid may activate transcription of acetate synthesis and other aspects of carbon metabolism. This Lachnoclostridium phytofermentans (strain ATCC 700394 / DSM 18823 / ISDg) (Clostridium phytofermentans) protein is HTH-type transcriptional regulator Cphy_2742.